A 367-amino-acid chain; its full sequence is NADH-quinone oxidoreductase subunit H (367 aa).

The next 8 helical transmembrane spans lie at 19–39 (ALFIKIIAVIISVMISVAYLV), 87–107 (ICFLIAPIITFTLALLGWAVI), 132–152 (IGVLYILAISSLGVYGIIIAG), 178–198 (IGLTIVTVLLATGSLKLGEIV), 204–224 (MPYWIDLLLLPMACIFFISAL), 266–286 (ILINAMAVIFFFGGWYPPLNI), 291–311 (IIPGIVWFVLKVVALLFCFIW), and 328–348 (GWKVFLPISLLWVVLVSSILV).

This sequence belongs to the complex I subunit 1 family. In terms of assembly, NDH-1 is composed of 14 different subunits. Subunits NuoA, H, J, K, L, M, N constitute the membrane sector of the complex.

The protein resides in the cell inner membrane. The enzyme catalyses a quinone + NADH + 5 H(+)(in) = a quinol + NAD(+) + 4 H(+)(out). Its function is as follows. NDH-1 shuttles electrons from NADH, via FMN and iron-sulfur (Fe-S) centers, to quinones in the respiratory chain. The immediate electron acceptor for the enzyme in this species is believed to be ubiquinone. Couples the redox reaction to proton translocation (for every two electrons transferred, four hydrogen ions are translocated across the cytoplasmic membrane), and thus conserves the redox energy in a proton gradient. This subunit may bind ubiquinone. This chain is NADH-quinone oxidoreductase subunit H, found in Ehrlichia chaffeensis (strain ATCC CRL-10679 / Arkansas).